The sequence spans 186 residues: uncharacterized protein (186 aa).

To M.jannaschii MJ0208.

This is an uncharacterized protein from Methanocaldococcus jannaschii (strain ATCC 43067 / DSM 2661 / JAL-1 / JCM 10045 / NBRC 100440) (Methanococcus jannaschii).